A 609-amino-acid polypeptide reads, in one-letter code: Granule-bound starch synthase 1, chloroplastic/amyloplastic (609 aa).

Residues 1-77 constitute a chloroplast transit peptide; the sequence is MSALTTSQLA…SRRFPSVVVY (77 aa). The segment at 29-67 is disordered; the sequence is RHGFQGLKPRSPAGGDATSLSVTTSARATPKQQRSVQRG. Positions 46–66 are enriched in polar residues; that stretch reads TSLSVTTSARATPKQQRSVQR. Lysine 97 is an ADP-alpha-D-glucose binding site.

This sequence belongs to the glycosyltransferase 1 family. Bacterial/plant glycogen synthase subfamily.

It is found in the plastid. The protein resides in the chloroplast. The protein localises to the amyloplast. The catalysed reaction is an NDP-alpha-D-glucose + [(1-&gt;4)-alpha-D-glucosyl](n) = [(1-&gt;4)-alpha-D-glucosyl](n+1) + a ribonucleoside 5'-diphosphate + H(+). The protein operates within glycan biosynthesis; starch biosynthesis. Functionally, required for the synthesis of amylose in endosperm. The sequence is that of Granule-bound starch synthase 1, chloroplastic/amyloplastic (WAXY) from Oryza glaberrima (African rice).